A 239-amino-acid chain; its full sequence is 1-(5-phosphoribosyl)-5-[(5-phosphoribosylamino)methylideneamino] imidazole-4-carboxamide isomerase (239 aa).

Catalysis depends on aspartate 9, which acts as the Proton acceptor. Residue aspartate 131 is the Proton donor of the active site.

This sequence belongs to the HisA/HisF family.

It localises to the cytoplasm. It carries out the reaction 1-(5-phospho-beta-D-ribosyl)-5-[(5-phospho-beta-D-ribosylamino)methylideneamino]imidazole-4-carboxamide = 5-[(5-phospho-1-deoxy-D-ribulos-1-ylimino)methylamino]-1-(5-phospho-beta-D-ribosyl)imidazole-4-carboxamide. The protein operates within amino-acid biosynthesis; L-histidine biosynthesis; L-histidine from 5-phospho-alpha-D-ribose 1-diphosphate: step 4/9. This Bacteroides thetaiotaomicron (strain ATCC 29148 / DSM 2079 / JCM 5827 / CCUG 10774 / NCTC 10582 / VPI-5482 / E50) protein is 1-(5-phosphoribosyl)-5-[(5-phosphoribosylamino)methylideneamino] imidazole-4-carboxamide isomerase.